Reading from the N-terminus, the 674-residue chain is Methionine--tRNA ligase (674 aa).

A 'HIGH' region motif is present at residues proline 11–histidine 21. Zn(2+) contacts are provided by cysteine 142, cysteine 145, cysteine 155, and cysteine 158. The 'KMSKS' region motif lies at lysine 330–serine 334. An ATP-binding site is contributed by lysine 333. Residues aspartate 574–lysine 674 enclose the tRNA-binding domain.

Belongs to the class-I aminoacyl-tRNA synthetase family. MetG type 1 subfamily. Homodimer. Zn(2+) serves as cofactor.

It localises to the cytoplasm. The catalysed reaction is tRNA(Met) + L-methionine + ATP = L-methionyl-tRNA(Met) + AMP + diphosphate. Functionally, is required not only for elongation of protein synthesis but also for the initiation of all mRNA translation through initiator tRNA(fMet) aminoacylation. This Francisella tularensis subsp. tularensis (strain FSC 198) protein is Methionine--tRNA ligase.